We begin with the raw amino-acid sequence, 168 residues long: Phosphopantetheine adenylyltransferase (168 aa).

S9 provides a ligand contact to substrate. ATP-binding positions include 9-10 (SF) and H17. Substrate-binding residues include K41, L73, and R87. ATP is bound by residues 88–90 (GMR), E98, and 123–129 (WIYTSSS).

It belongs to the bacterial CoaD family. Homohexamer. Requires Mg(2+) as cofactor.

Its subcellular location is the cytoplasm. The enzyme catalyses (R)-4'-phosphopantetheine + ATP + H(+) = 3'-dephospho-CoA + diphosphate. It functions in the pathway cofactor biosynthesis; coenzyme A biosynthesis; CoA from (R)-pantothenate: step 4/5. Reversibly transfers an adenylyl group from ATP to 4'-phosphopantetheine, yielding dephospho-CoA (dPCoA) and pyrophosphate. The protein is Phosphopantetheine adenylyltransferase of Desulfosudis oleivorans (strain DSM 6200 / JCM 39069 / Hxd3) (Desulfococcus oleovorans).